The sequence spans 313 residues: Uracil-DNA glycosylase (313 aa).

Residues 35 to 68 form a disordered region; the sequence is DEPMPKKCRRPAGPPKGFISTRGDTSPSSDNNHI. Residues 56 to 68 are compositionally biased toward polar residues; the sequence is RGDTSPSSDNNHI. Asp-153 functions as the Proton acceptor in the catalytic mechanism.

This sequence belongs to the uracil-DNA glycosylase (UDG) superfamily. UNG family.

It localises to the host nucleus. The catalysed reaction is Hydrolyzes single-stranded DNA or mismatched double-stranded DNA and polynucleotides, releasing free uracil.. Functionally, excises uracil residues from the DNA which can arise as a result of misincorporation of dUMP residues by DNA polymerase or deamination of cytosines. Therefore may reduce deleterious uracil incorporation into the viral genome, particularly in terminally differentiated cells which lack DNA repair enzymes. The protein is Uracil-DNA glycosylase (MDV014) of Gallus gallus (Chicken).